Consider the following 1238-residue polypeptide: Protein translocase subunit SecA 1 (1238 aa).

ATP-binding positions include glutamine 107, 125-129 (GEGKT), and aspartate 570. The segment at 1194–1220 (AAGSEGRAEGSVDTVRVEEPRIGRNAP) is disordered. The span at 1199-1215 (GRAEGSVDTVRVEEPRI) shows a compositional bias: basic and acidic residues. Positions 1221, 1223, 1232, and 1233 each coordinate Zn(2+).

It belongs to the SecA family. Monomer and homodimer. Part of the essential Sec protein translocation apparatus which comprises SecA, SecYEG and auxiliary proteins SecDF. Other proteins may also be involved. Zn(2+) serves as cofactor.

It localises to the cell inner membrane. Its subcellular location is the cytoplasm. The catalysed reaction is ATP + H2O + cellular proteinSide 1 = ADP + phosphate + cellular proteinSide 2.. Part of the Sec protein translocase complex. Interacts with the SecYEG preprotein conducting channel. Has a central role in coupling the hydrolysis of ATP to the transfer of proteins into and across the cell membrane, serving as an ATP-driven molecular motor driving the stepwise translocation of polypeptide chains across the membrane. The protein is Protein translocase subunit SecA 1 of Rhodopirellula baltica (strain DSM 10527 / NCIMB 13988 / SH1).